We begin with the raw amino-acid sequence, 74 residues long: Cytochrome c oxidase subunit 2 (74 aa).

At 1-14 (MAHPMQLGFQDAAS) the chain is on the mitochondrial intermembrane side. The helical transmembrane segment at 15-45 (PVMEELLHFHDHALMIVFLISTAVLYIIVVT) threads the bilayer. Residues 46 to 74 (VTTKLTDKYVLDAQEIEMVWTIMPAVVLI) lie on the Mitochondrial matrix side of the membrane.

Belongs to the cytochrome c oxidase subunit 2 family. As to quaternary structure, component of the cytochrome c oxidase (complex IV, CIV), a multisubunit enzyme composed of 14 subunits. The complex is composed of a catalytic core of 3 subunits MT-CO1, MT-CO2 and MT-CO3, encoded in the mitochondrial DNA, and 11 supernumerary subunits COX4I, COX5A, COX5B, COX6A, COX6B, COX6C, COX7A, COX7B, COX7C, COX8 and NDUFA4, which are encoded in the nuclear genome. The complex exists as a monomer or a dimer and forms supercomplexes (SCs) in the inner mitochondrial membrane with NADH-ubiquinone oxidoreductase (complex I, CI) and ubiquinol-cytochrome c oxidoreductase (cytochrome b-c1 complex, complex III, CIII), resulting in different assemblies (supercomplex SCI(1)III(2)IV(1) and megacomplex MCI(2)III(2)IV(2)). Found in a complex with TMEM177, COA6, COX18, COX20, SCO1 and SCO2. Interacts with TMEM177 in a COX20-dependent manner. Interacts with COX20. Interacts with COX16. It depends on Cu cation as a cofactor.

Its subcellular location is the mitochondrion inner membrane. It carries out the reaction 4 Fe(II)-[cytochrome c] + O2 + 8 H(+)(in) = 4 Fe(III)-[cytochrome c] + 2 H2O + 4 H(+)(out). In terms of biological role, component of the cytochrome c oxidase, the last enzyme in the mitochondrial electron transport chain which drives oxidative phosphorylation. The respiratory chain contains 3 multisubunit complexes succinate dehydrogenase (complex II, CII), ubiquinol-cytochrome c oxidoreductase (cytochrome b-c1 complex, complex III, CIII) and cytochrome c oxidase (complex IV, CIV), that cooperate to transfer electrons derived from NADH and succinate to molecular oxygen, creating an electrochemical gradient over the inner membrane that drives transmembrane transport and the ATP synthase. Cytochrome c oxidase is the component of the respiratory chain that catalyzes the reduction of oxygen to water. Electrons originating from reduced cytochrome c in the intermembrane space (IMS) are transferred via the dinuclear copper A center (CU(A)) of subunit 2 and heme A of subunit 1 to the active site in subunit 1, a binuclear center (BNC) formed by heme A3 and copper B (CU(B)). The BNC reduces molecular oxygen to 2 water molecules using 4 electrons from cytochrome c in the IMS and 4 protons from the mitochondrial matrix. This chain is Cytochrome c oxidase subunit 2 (mt-co2), found in Amia calva (Bowfin).